The following is a 34-amino-acid chain: NU-buthitoxin-Ptr1a (34 aa).

Cystine bridges form between C6/C27, C12/C32, and C16/C34.

As to expression, expressed by the venom gland.

It localises to the secreted. In terms of biological role, toxin that acts as an agonist on melanocortin receptors (MC1R, MC3R, MC5R, MC5R). After binding to MC1R, the peptide activates the hMC1R/Gs pathway, but after binding to MC4R, it is not able to activate or antagonize the MC4R/Gs pathway. Inhibits melanocyte stimulating hormone (MSH)-binding to human receptors (Ki=2.9 uM to MC1R, Ki=3.9 uM to MC3R, Ki=2.6 uM to MC4R, Ki=2.2 uM to MC5R). This toxin is structurally unrelated to the natural agonists. The polypeptide is NU-buthitoxin-Ptr1a (Parabuthus transvaalicus (Transvaal thick-tailed scorpion)).